The sequence spans 479 residues: GTPase Obg (479 aa).

Residues 2 to 159 (TTFVDRVELH…QDIVLELKTV (158 aa)) enclose the Obg domain. A disordered region spans residues 61–87 (HHKPHRSATNGKPGEGGNRSGKDGQDL). The region spanning 160 to 331 (ADVALVGYPS…LSFALAELVG (172 aa)) is the OBG-type G domain. GTP contacts are provided by residues 166-173 (GYPSAGKS), 191-195 (FTTLV), 212-215 (DVPG), 283-286 (NKID), and 312-314 (SAV). S173 and T193 together coordinate Mg(2+). The region spanning 349–431 (PKAVDDAGFT…DNAVVFDWEP (83 aa)) is the OCT domain. Positions 440 to 453 (LGRRGEDHRLDEPR) are enriched in basic and acidic residues. Residues 440–479 (LGRRGEDHRLDEPRPAAQRRRDKQAERDDAEKEYDDFEPF) are disordered. The span at 470–479 (EKEYDDFEPF) shows a compositional bias: acidic residues.

This sequence belongs to the TRAFAC class OBG-HflX-like GTPase superfamily. OBG GTPase family. As to quaternary structure, monomer. The cofactor is Mg(2+).

The protein resides in the cytoplasm. Functionally, an essential GTPase which binds GTP, GDP and possibly (p)ppGpp with moderate affinity, with high nucleotide exchange rates and a fairly low GTP hydrolysis rate. Plays a role in control of the cell cycle, stress response, ribosome biogenesis and in those bacteria that undergo differentiation, in morphogenesis control. The protein is GTPase Obg of Streptomyces avermitilis (strain ATCC 31267 / DSM 46492 / JCM 5070 / NBRC 14893 / NCIMB 12804 / NRRL 8165 / MA-4680).